Consider the following 1199-residue polypeptide: Nucleolar protein 6 (1199 aa).

Residues 1 to 10 (MLRNKRKAGK) are compositionally biased toward basic residues. Disordered regions lie at residues 1–51 (MLRN…EPKP) and 1146–1199 (KREQ…KALK). Composition is skewed to basic and acidic residues over residues 28-37 (HAEDHSDLEH) and 1146-1169 (KREQ…EKST).

Belongs to the NRAP family. In terms of assembly, part of the small subunit (SSU) processome, composed of more than 70 proteins and the RNA chaperone small nucleolar RNA (snoRNA) U3.

It is found in the nucleus. It localises to the nucleolus. Its subcellular location is the chromosome. Part of the small subunit (SSU) processome, first precursor of the small eukaryotic ribosomal subunit. During the assembly of the SSU processome in the nucleolus, many ribosome biogenesis factors, an RNA chaperone and ribosomal proteins associate with the nascent pre-rRNA and work in concert to generate RNA folding, modifications, rearrangements and cleavage as well as targeted degradation of pre-ribosomal RNA by the RNA exosome. The sequence is that of Nucleolar protein 6 from Drosophila yakuba (Fruit fly).